Here is a 107-residue protein sequence, read N- to C-terminus: Small ribosomal subunit protein bS16 (107 aa).

The segment at 85–107 is disordered; the sequence is REARNNPEKAVPRKERKAAEAGK.

Belongs to the bacterial ribosomal protein bS16 family.

The sequence is that of Small ribosomal subunit protein bS16 from Rhodopseudomonas palustris (strain BisB5).